The following is a 172-amino-acid chain: Adenine phosphoribosyltransferase (172 aa).

The protein belongs to the purine/pyrimidine phosphoribosyltransferase family. In terms of assembly, homodimer.

Its subcellular location is the cytoplasm. The catalysed reaction is AMP + diphosphate = 5-phospho-alpha-D-ribose 1-diphosphate + adenine. Its pathway is purine metabolism; AMP biosynthesis via salvage pathway; AMP from adenine: step 1/1. Catalyzes a salvage reaction resulting in the formation of AMP, that is energically less costly than de novo synthesis. The polypeptide is Adenine phosphoribosyltransferase (Desulforamulus reducens (strain ATCC BAA-1160 / DSM 100696 / MI-1) (Desulfotomaculum reducens)).